Here is a 347-residue protein sequence, read N- to C-terminus: MKNILDFTLEELKEWMKENGENAFRAKQIFDWIYKKEVFNFEEMKNISKALIGKLSENFYIGIPEVIDYLSSSEDGTRKILLGLGDGNIIECVIMKYKYGNSICVSTQIGCRMGCKFCASTLEGMVRNLTAGEILSEVLIGQKLLGERISNIVLMGSGEPLDNYDNVMKFLEIVNADYGLNIGQRHITLSTCGLVPKIREMADKEMQVTLAISLHAVSDEKRKTIMPIANKYSISEILDACNYYIEKTGRRITFEYSLVSGVNDTKEDAKSLGRLLKGMLCHVNLIPVNEIKENEFKKSTKKDIETFLNTLKTYGVEATVRREMGSDINAACGQLRRSYIKSKGLKL.

Glu-91 (proton acceptor) is an active-site residue. The 231-residue stretch at 97–327 (YKYGNSICVS…ATVRREMGSD (231 aa)) folds into the Radical SAM core domain. A disulfide bridge connects residues Cys-104 and Cys-332. [4Fe-4S] cluster-binding residues include Cys-111, Cys-115, and Cys-118. S-adenosyl-L-methionine contacts are provided by residues 158-159 (GE), Ser-190, 213-215 (SLH), and Asn-289. Cys-332 (S-methylcysteine intermediate) is an active-site residue.

This sequence belongs to the radical SAM superfamily. RlmN family. [4Fe-4S] cluster serves as cofactor.

The protein localises to the cytoplasm. The enzyme catalyses adenosine(2503) in 23S rRNA + 2 reduced [2Fe-2S]-[ferredoxin] + 2 S-adenosyl-L-methionine = 2-methyladenosine(2503) in 23S rRNA + 5'-deoxyadenosine + L-methionine + 2 oxidized [2Fe-2S]-[ferredoxin] + S-adenosyl-L-homocysteine. It carries out the reaction adenosine(37) in tRNA + 2 reduced [2Fe-2S]-[ferredoxin] + 2 S-adenosyl-L-methionine = 2-methyladenosine(37) in tRNA + 5'-deoxyadenosine + L-methionine + 2 oxidized [2Fe-2S]-[ferredoxin] + S-adenosyl-L-homocysteine. Functionally, specifically methylates position 2 of adenine 2503 in 23S rRNA and position 2 of adenine 37 in tRNAs. This is Probable dual-specificity RNA methyltransferase RlmN from Clostridium perfringens (strain SM101 / Type A).